The following is a 429-amino-acid chain: Enolase (429 aa).

Gln-163 contributes to the (2R)-2-phosphoglycerate binding site. The active-site Proton donor is Glu-205. Asp-242, Glu-287, and Asp-314 together coordinate Mg(2+). The (2R)-2-phosphoglycerate site is built by Lys-339, Arg-368, Ser-369, and Lys-390. Lys-339 functions as the Proton acceptor in the catalytic mechanism.

The protein belongs to the enolase family. Mg(2+) serves as cofactor.

The protein localises to the cytoplasm. The protein resides in the secreted. It localises to the cell surface. The enzyme catalyses (2R)-2-phosphoglycerate = phosphoenolpyruvate + H2O. It participates in carbohydrate degradation; glycolysis; pyruvate from D-glyceraldehyde 3-phosphate: step 4/5. In terms of biological role, catalyzes the reversible conversion of 2-phosphoglycerate (2-PG) into phosphoenolpyruvate (PEP). It is essential for the degradation of carbohydrates via glycolysis. This is Enolase from Anaeromyxobacter sp. (strain Fw109-5).